We begin with the raw amino-acid sequence, 324 residues long: Glyoxylate/hydroxypyruvate reductase B (324 aa).

Residues arginine 237 and glutamate 266 contribute to the active site. Histidine 285 serves as the catalytic Proton donor.

The protein belongs to the D-isomer specific 2-hydroxyacid dehydrogenase family. GhrB subfamily. As to quaternary structure, homodimer.

It is found in the cytoplasm. It carries out the reaction glycolate + NADP(+) = glyoxylate + NADPH + H(+). The catalysed reaction is (R)-glycerate + NAD(+) = 3-hydroxypyruvate + NADH + H(+). The enzyme catalyses (R)-glycerate + NADP(+) = 3-hydroxypyruvate + NADPH + H(+). Functionally, catalyzes the NADPH-dependent reduction of glyoxylate and hydroxypyruvate into glycolate and glycerate, respectively. The protein is Glyoxylate/hydroxypyruvate reductase B of Salmonella agona (strain SL483).